The following is a 627-amino-acid chain: MISLDSLRSLVTGLGTSKDKGASASYYFQPLGPDELNAMHRGDWLAQKVIDIIPNDMTREWRNWQAKQPQIEKIEAVEKAPLINLQVKVNLALKMARLHGGSVIYIGIKGTVDLSEPLDPRSIGRGDLAYLHVLSRYEVTCGETVTDVTSEFYGQPSYYEVAGANGAPVQIHPSRVVRFVGAPVLDRRSVGNDPWGDSVLQAVYDAVRNAGSAQGHIAALIPEAKVDIIHMPGLGEFTKTEAGRAKLTARFTYANTMKSMLNAVLLDGTGGAGKDAGGEKWEQKQISFAQLPELLQSYLSIASAAADIPATRMLSQSPKGLNATGDSDMRNHYDNCTARQGTELSPALNRLDEVILRSALGSRPAAIYYEWAPLWGLTEKEQAEVFKMKADGARALAGAKGGPLLPVNALSDALVNTFTEDGSLPGLEAAIEEHGTLADQPETESANENTEQPESGEEGEEGQPTRRAANDAKPRPLYVSRKLINGREFLKWAKEQGFAKTLKADDLHVTITYSREAVDWMAMGQSWGGEDGKLTVPAGGARLVEPLGDEGAVVLLFNSSELAWRHMGMREAGASWDHPEYQPHVTITYEVGDVDLSQVEPYRGKLVFGPEVFEEIDECWAENLNET.

Y105 is a binding site for 3',3'-cGAMP. A 3',3'-cUAMP-binding site is contributed by Y105. The interval 437–474 (LADQPETESANENTEQPESGEEGEEGQPTRRAANDAKP) is disordered. Active-site residues include H508, T510, H584, and T586. 3',3'-cGAMP contacts are provided by E614 and W620. 3',3'-cUAMP is bound by residues E614 and W620.

The protein belongs to the anti-CBASS protein Acb1 family.

It catalyses the reaction 3',3'-cUAMP + H2O = U[3'-5']pAp[3'] + H(+). The catalysed reaction is 3',3',3'-c-tri-AMP + H2O = A[3'-5']pA[3'-5']pAp[3'] + H(+). It carries out the reaction 3',3',3'-cAAG + H2O = G[3'-5']pA[3'-5']pAp[3'] + H(+). The enzyme catalyses 3',3',3'-cAAG + H2O = A[3'-5']pG[3'-5']pAp[3'] + H(+). It catalyses the reaction 3',3'-cGAMP + H2O = G[3'-5']pAp[3'] + H(+). Its function is as follows. Counteracts or regulates the endogenous CBASS antiviral defense system. Phosphodiesterase that enables metal-independent hydrolysis of the host cyclic di- and trinucleotide CBASS signals such as 3'3'-cGAMP, 3'3'cUA, and 3'3'3'-cAAA. The sequence is that of Anti-CBASS protein Acb1 from Caulobacter sp. (strain RHG1).